Reading from the N-terminus, the 271-residue chain is Tryptophan synthase alpha chain (271 aa).

Catalysis depends on proton acceptor residues E47 and D58.

This sequence belongs to the TrpA family. In terms of assembly, tetramer of two alpha and two beta chains.

The enzyme catalyses (1S,2R)-1-C-(indol-3-yl)glycerol 3-phosphate + L-serine = D-glyceraldehyde 3-phosphate + L-tryptophan + H2O. The protein operates within amino-acid biosynthesis; L-tryptophan biosynthesis; L-tryptophan from chorismate: step 5/5. Functionally, the alpha subunit is responsible for the aldol cleavage of indoleglycerol phosphate to indole and glyceraldehyde 3-phosphate. In Thermus thermophilus (strain ATCC BAA-163 / DSM 7039 / HB27), this protein is Tryptophan synthase alpha chain.